The chain runs to 562 residues: Dihydroxy-acid dehydratase (562 aa).

Residue Asp78 participates in Mg(2+) binding. A [2Fe-2S] cluster-binding site is contributed by Cys119. Residues Asp120 and Lys121 each coordinate Mg(2+). The residue at position 121 (Lys121) is an N6-carboxylysine. Residue Cys192 participates in [2Fe-2S] cluster binding. A Mg(2+)-binding site is contributed by Glu449. Ser475 acts as the Proton acceptor in catalysis.

This sequence belongs to the IlvD/Edd family. As to quaternary structure, homodimer. [2Fe-2S] cluster serves as cofactor. Mg(2+) is required as a cofactor.

The enzyme catalyses (2R)-2,3-dihydroxy-3-methylbutanoate = 3-methyl-2-oxobutanoate + H2O. It catalyses the reaction (2R,3R)-2,3-dihydroxy-3-methylpentanoate = (S)-3-methyl-2-oxopentanoate + H2O. Its pathway is amino-acid biosynthesis; L-isoleucine biosynthesis; L-isoleucine from 2-oxobutanoate: step 3/4. It participates in amino-acid biosynthesis; L-valine biosynthesis; L-valine from pyruvate: step 3/4. Functions in the biosynthesis of branched-chain amino acids. Catalyzes the dehydration of (2R,3R)-2,3-dihydroxy-3-methylpentanoate (2,3-dihydroxy-3-methylvalerate) into 2-oxo-3-methylpentanoate (2-oxo-3-methylvalerate) and of (2R)-2,3-dihydroxy-3-methylbutanoate (2,3-dihydroxyisovalerate) into 2-oxo-3-methylbutanoate (2-oxoisovalerate), the penultimate precursor to L-isoleucine and L-valine, respectively. The chain is Dihydroxy-acid dehydratase from Aliarcobacter butzleri (strain RM4018) (Arcobacter butzleri).